We begin with the raw amino-acid sequence, 313 residues long: Probable lysophospholipase L2 (313 aa).

The protein localises to the cell inner membrane. The catalysed reaction is a 1-acyl-sn-glycero-3-phosphocholine + H2O = sn-glycerol 3-phosphocholine + a fatty acid + H(+). This chain is Probable lysophospholipase L2 (pldB), found in Haemophilus influenzae (strain ATCC 51907 / DSM 11121 / KW20 / Rd).